Consider the following 276-residue polypeptide: NH(3)-dependent NAD(+) synthetase (276 aa).

ATP is bound at residue 43–50 (GISGGVDS). Residue D49 participates in Mg(2+) binding. R146 is a binding site for deamido-NAD(+). T166 contacts ATP. Position 171 (E171) interacts with Mg(2+). Deamido-NAD(+) contacts are provided by K179 and D186. 2 residues coordinate ATP: K195 and T217. 266-267 (HK) is a deamido-NAD(+) binding site.

It belongs to the NAD synthetase family. In terms of assembly, homodimer.

It carries out the reaction deamido-NAD(+) + NH4(+) + ATP = AMP + diphosphate + NAD(+) + H(+). It functions in the pathway cofactor biosynthesis; NAD(+) biosynthesis; NAD(+) from deamido-NAD(+) (ammonia route): step 1/1. Its function is as follows. Catalyzes the ATP-dependent amidation of deamido-NAD to form NAD. Uses ammonia as a nitrogen source. The sequence is that of NH(3)-dependent NAD(+) synthetase from Aliivibrio fischeri (strain ATCC 700601 / ES114) (Vibrio fischeri).